A 99-amino-acid chain; its full sequence is Protein NCBP2AS2 (99 aa).

The disordered stretch occupies residues 76–99 (ELRRGLRGRSGPPPGSQRGPGANI).

The protein is Protein NCBP2AS2 of Homo sapiens (Human).